An 843-amino-acid polypeptide reads, in one-letter code: MPLSYQHFRKLLLLDDEAGPLEEELPRLADEGLNHRVAEDLNLGNPNVSIPWTHKVGNFTGLYSSTVPVFNPEWQTPSFPDIHLQEDIVDRCKQFVGPLTVNENRRLKLIMPARFYPNVTKYLPLDKGIKPYYPEHVVNHYFQTRHYLHTLWKAGILYKRESTHSASFCGSPYSWEQDLQHGRLVFQTSKRHGDKSFCPQSPGILPRSSVGPCIQSQLRKSRLGPQPTQGQLAGRPQGGSGSIRARIHPSPWGTVGVEPSGSGHTHICASSSSSCLHQSAVRTAAYSPISTSKGHSSSGHAVELHHFPPNSSRSQSQGSVLSCWWLQFRNSKPCSEYCLSHIVNLIEDWGPCAEHGEHRIRTPRTPARVTGGVFLVDKNPHNTTESRLVVDFSQFSRGNTRVSWPKFAVPNLQSLTNLLSSNLSWLSLDVSAAFYHLPLHPAAMPHLLVGSSGLSRYVARLSSNSRIINHQHGTMQDLHNSCSRNLYVSLMLLYKTYGWKLHLYSHPIILGFRKIPMGVGLSPFLLAQFTSAICSVVRRAFPHCLAFSYMDDVVLGAKSVQHLESLYAAVTNFLLSLGIHLNPNKTKRWGYSLNFMGYVIGSWGTWPQDHIVQNFKLCFRKLPVNRPIDWKVCQRIVGLLGFAAPFTQCGYPALMPLYACIQAKQAFTFSPTYKAFLSKQYMTLYPVARQRPGLCQVFADATPTGWGLAIGHQRMRGTFVSPLPIHTAELLAACFARSRSGANLIGTDNSVVLSRKYTSFPWLLGCAANWILRGTSFVYVPSALNPADDPSRGRLGLYRPLLRLPYRPTTGRTSLYADSPSVPSHLPDRVHFASPLHVAWRPP.

A terminal protein domain (TP) region spans residues 1–177 (MPLSYQHFRK…FCGSPYSWEQ (177 aa)). The interval 178–346 (DLQHGRLVFQ…YCLSHIVNLI (169 aa)) is spacer. 2 disordered regions span residues 219-249 (RKSRLGPQPTQGQLAGRPQGGSGSIRARIHP) and 290-316 (STSKGHSSSGHAVELHHFPPNSSRSQS). The span at 290–299 (STSKGHSSSG) shows a compositional bias: polar residues. A polymerase/reverse transcriptase domain (RT) region spans residues 347-690 (EDWGPCAEHG…YMTLYPVARQ (344 aa)). The region spanning 357-600 (EHRIRTPRTP…YSLNFMGYVI (244 aa)) is the Reverse transcriptase domain. Positions 429, 551, and 552 each coordinate Mg(2+).

This sequence belongs to the hepadnaviridae P protein family.

It catalyses the reaction DNA(n) + a 2'-deoxyribonucleoside 5'-triphosphate = DNA(n+1) + diphosphate. It carries out the reaction Endonucleolytic cleavage to 5'-phosphomonoester.. With respect to regulation, activated by host HSP70 and HSP40 in vitro to be able to bind the epsilon loop of the pgRNA. Because deletion of the RNase H region renders the protein partly chaperone-independent, the chaperones may be needed indirectly to relieve occlusion of the RNA-binding site by this domain. Inhibited by several reverse-transcriptase inhibitors: Lamivudine, Adefovir and Entecavir. Its function is as follows. Multifunctional enzyme that converts the viral RNA genome into dsDNA in viral cytoplasmic capsids. This enzyme displays a DNA polymerase activity that can copy either DNA or RNA templates, and a ribonuclease H (RNase H) activity that cleaves the RNA strand of RNA-DNA heteroduplexes in a partially processive 3'- to 5'-endonucleasic mode. Neo-synthesized pregenomic RNA (pgRNA) are encapsidated together with the P protein, and reverse-transcribed inside the nucleocapsid. Initiation of reverse-transcription occurs first by binding the epsilon loop on the pgRNA genome, and is initiated by protein priming, thereby the 5'-end of (-)DNA is covalently linked to P protein. Partial (+)DNA is synthesized from the (-)DNA template and generates the relaxed circular DNA (RC-DNA) genome. After budding and infection, the RC-DNA migrates in the nucleus, and is converted into a plasmid-like covalently closed circular DNA (cccDNA). The activity of P protein does not seem to be necessary for cccDNA generation, and is presumably released from (+)DNA by host nuclear DNA repair machinery. In Homo sapiens (Human), this protein is Protein P.